Reading from the N-terminus, the 782-residue chain is Hypersensitive to pore-forming toxin protein 40 (782 aa).

Positions 138–203 (ESEIVPGAMY…TLFVSDQFSI (66 aa)) constitute a Tudor; degenerate domain. Composition is skewed to polar residues over residues 332 to 346 (SVNP…SSSM) and 413 to 443 (FEST…STIQ). Disordered stretches follow at residues 332-351 (SVNP…DCPY), 413-448 (FEST…NEED), 472-492 (IERP…NMSE), and 617-672 (VAQG…LEDP). Residues 617–634 (VAQGSNAPKTAPNDSVNS) are compositionally biased toward polar residues. Residues 638–662 (DDIHETDKRGNHCKSVTEDPKDNKD) are compositionally biased toward basic and acidic residues.

Its subcellular location is the cytoplasm. It localises to the perinuclear region. This Caenorhabditis elegans protein is Hypersensitive to pore-forming toxin protein 40.